The primary structure comprises 69 residues: Neuropeptide-like protein 30 (69 aa).

Residues 1–22 (MISTSSILILVVLLACFMAASA) form the signal peptide. Tyrosine amide is present on residues Tyr-29, Tyr-39, Tyr-46, and Tyr-53. Tryptophan amide occurs at positions 58 and 67.

This sequence belongs to the YARP (YGGW-amide related peptide) family. In terms of tissue distribution, expressed in hypoderm.

It is found in the secreted. In terms of biological role, may have antimicrobial activity. May play a role in response to fungal infection. The chain is Neuropeptide-like protein 30 (nlp-30) from Caenorhabditis elegans.